The chain runs to 250 residues: Homeobox protein Dlx4a (250 aa).

The segment at residues 123–182 (IRKPRTIYSSLQLQALNQRFQQTQYLALPERADLAAKLGLTQTQVKIWFQNKRSKYKKIM) is a DNA-binding region (homeobox). The tract at residues 182–202 (MKHGSSGPEGEHLQAASASGA) is disordered.

This sequence belongs to the distal-less homeobox family.

The protein resides in the nucleus. The polypeptide is Homeobox protein Dlx4a (dlx4a) (Danio rerio (Zebrafish)).